We begin with the raw amino-acid sequence, 200 residues long: 3-isopropylmalate dehydratase small subunit (200 aa).

Belongs to the LeuD family. LeuD type 1 subfamily. As to quaternary structure, heterodimer of LeuC and LeuD.

The enzyme catalyses (2R,3S)-3-isopropylmalate = (2S)-2-isopropylmalate. It participates in amino-acid biosynthesis; L-leucine biosynthesis; L-leucine from 3-methyl-2-oxobutanoate: step 2/4. Functionally, catalyzes the isomerization between 2-isopropylmalate and 3-isopropylmalate, via the formation of 2-isopropylmaleate. This chain is 3-isopropylmalate dehydratase small subunit, found in Campylobacter jejuni (strain RM1221).